The sequence spans 157 residues: Protein-export protein SecB (157 aa).

It belongs to the SecB family. Homotetramer, a dimer of dimers. One homotetramer interacts with 1 SecA dimer.

It is found in the cytoplasm. Functionally, one of the proteins required for the normal export of preproteins out of the cell cytoplasm. It is a molecular chaperone that binds to a subset of precursor proteins, maintaining them in a translocation-competent state. It also specifically binds to its receptor SecA. The polypeptide is Protein-export protein SecB (Proteus mirabilis (strain HI4320)).